The sequence spans 73 residues: Translation initiation factor IF-1 (73 aa).

One can recognise an S1-like domain in the interval 1–73 (MAKKDGVIEI…TRGRIVYRYK (73 aa)).

It belongs to the IF-1 family. As to quaternary structure, component of the 30S ribosomal translation pre-initiation complex which assembles on the 30S ribosome in the order IF-2 and IF-3, IF-1 and N-formylmethionyl-tRNA(fMet); mRNA recruitment can occur at any time during PIC assembly.

Its subcellular location is the cytoplasm. Functionally, one of the essential components for the initiation of protein synthesis. Stabilizes the binding of IF-2 and IF-3 on the 30S subunit to which N-formylmethionyl-tRNA(fMet) subsequently binds. Helps modulate mRNA selection, yielding the 30S pre-initiation complex (PIC). Upon addition of the 50S ribosomal subunit IF-1, IF-2 and IF-3 are released leaving the mature 70S translation initiation complex. The chain is Translation initiation factor IF-1 from Leifsonia xyli subsp. xyli (strain CTCB07).